Reading from the N-terminus, the 419-residue chain is UDP-N-acetylglucosamine 1-carboxyvinyltransferase (419 aa).

22–23 (KN) is a binding site for phosphoenolpyruvate. Residue Arg-93 participates in UDP-N-acetyl-alpha-D-glucosamine binding. Cys-117 functions as the Proton donor in the catalytic mechanism. Position 117 is a 2-(S-cysteinyl)pyruvic acid O-phosphothioketal (Cys-117). 2 residues coordinate UDP-N-acetyl-alpha-D-glucosamine: Asp-307 and Ile-329.

This sequence belongs to the EPSP synthase family. MurA subfamily.

The protein localises to the cytoplasm. It carries out the reaction phosphoenolpyruvate + UDP-N-acetyl-alpha-D-glucosamine = UDP-N-acetyl-3-O-(1-carboxyvinyl)-alpha-D-glucosamine + phosphate. It participates in cell wall biogenesis; peptidoglycan biosynthesis. In terms of biological role, cell wall formation. Adds enolpyruvyl to UDP-N-acetylglucosamine. This chain is UDP-N-acetylglucosamine 1-carboxyvinyltransferase, found in Pseudoalteromonas atlantica (strain T6c / ATCC BAA-1087).